Here is a 345-residue protein sequence, read N- to C-terminus: Dihydroorotate dehydrogenase (quinone) (345 aa).

FMN contacts are provided by residues 65-69 (AGLDK) and Thr-89. A substrate-binding site is contributed by Lys-69. Residue 114–118 (NRLGF) coordinates substrate. 2 residues coordinate FMN: Asn-146 and Asn-179. Asn-179 serves as a coordination point for substrate. Ser-182 acts as the Nucleophile in catalysis. A substrate-binding site is contributed by Asn-184. FMN is bound by residues Lys-224 and Thr-252. Residue 253-254 (NT) participates in substrate binding. FMN is bound by residues Gly-275, Gly-304, and 325–326 (YT).

The protein belongs to the dihydroorotate dehydrogenase family. Type 2 subfamily. In terms of assembly, monomer. The cofactor is FMN.

It localises to the cell membrane. The enzyme catalyses (S)-dihydroorotate + a quinone = orotate + a quinol. It functions in the pathway pyrimidine metabolism; UMP biosynthesis via de novo pathway; orotate from (S)-dihydroorotate (quinone route): step 1/1. In terms of biological role, catalyzes the conversion of dihydroorotate to orotate with quinone as electron acceptor. This is Dihydroorotate dehydrogenase (quinone) from Leptothrix cholodnii (strain ATCC 51168 / LMG 8142 / SP-6) (Leptothrix discophora (strain SP-6)).